We begin with the raw amino-acid sequence, 256 residues long: 2-C-methyl-D-erythritol 4-phosphate cytidylyltransferase (256 aa).

It belongs to the IspD/TarI cytidylyltransferase family. IspD subfamily.

The catalysed reaction is 2-C-methyl-D-erythritol 4-phosphate + CTP + H(+) = 4-CDP-2-C-methyl-D-erythritol + diphosphate. Its pathway is isoprenoid biosynthesis; isopentenyl diphosphate biosynthesis via DXP pathway; isopentenyl diphosphate from 1-deoxy-D-xylulose 5-phosphate: step 2/6. Functionally, catalyzes the formation of 4-diphosphocytidyl-2-C-methyl-D-erythritol from CTP and 2-C-methyl-D-erythritol 4-phosphate (MEP). This Corynebacterium glutamicum (strain R) protein is 2-C-methyl-D-erythritol 4-phosphate cytidylyltransferase.